We begin with the raw amino-acid sequence, 325 residues long: tRNA(Ile)-lysidine synthase (325 aa).

An ATP-binding site is contributed by 34-39 (SGGADS).

The protein belongs to the tRNA(Ile)-lysidine synthase family.

The protein resides in the cytoplasm. It carries out the reaction cytidine(34) in tRNA(Ile2) + L-lysine + ATP = lysidine(34) in tRNA(Ile2) + AMP + diphosphate + H(+). Its function is as follows. Ligates lysine onto the cytidine present at position 34 of the AUA codon-specific tRNA(Ile) that contains the anticodon CAU, in an ATP-dependent manner. Cytidine is converted to lysidine, thus changing the amino acid specificity of the tRNA from methionine to isoleucine. This is tRNA(Ile)-lysidine synthase from Rhodococcus opacus (strain B4).